The chain runs to 247 residues: Carboxy-S-adenosyl-L-methionine synthase (247 aa).

Residues Tyr-39, 64-66 (GCS), 89-90 (DN), 117-118 (DI), Asn-132, and Arg-199 each bind S-adenosyl-L-methionine.

It belongs to the class I-like SAM-binding methyltransferase superfamily. Cx-SAM synthase family. Homodimer.

It carries out the reaction prephenate + S-adenosyl-L-methionine = carboxy-S-adenosyl-L-methionine + 3-phenylpyruvate + H2O. Catalyzes the conversion of S-adenosyl-L-methionine (SAM) to carboxy-S-adenosyl-L-methionine (Cx-SAM). The sequence is that of Carboxy-S-adenosyl-L-methionine synthase from Salmonella paratyphi B (strain ATCC BAA-1250 / SPB7).